Reading from the N-terminus, the 134-residue chain is Large ribosomal subunit protein bL17 (134 aa).

Belongs to the bacterial ribosomal protein bL17 family. Part of the 50S ribosomal subunit. Contacts protein L32.

The polypeptide is Large ribosomal subunit protein bL17 (Aromatoleum aromaticum (strain DSM 19018 / LMG 30748 / EbN1) (Azoarcus sp. (strain EbN1))).